Consider the following 568-residue polypeptide: O-fucosyltransferase 9 (568 aa).

The segment covering 1 to 19 (MHGLSRLGNGSSNGRINIP) has biased composition (low complexity). Positions 1 to 33 (MHGLSRLGNGSSNGRINIPSPSPPSSPRIRHTR) are disordered. A helical; Signal-anchor for type II membrane protein membrane pass occupies residues 65 to 85 (LLLAPLLYIAGMLLFMGSFGF). 4 N-linked (GlcNAc...) asparagine glycosylation sites follow: Asn125, Asn151, Asn189, and Asn243. 336-338 (HLR) is a binding site for substrate. N-linked (GlcNAc...) asparagine glycans are attached at residues Asn408 and Asn409.

Belongs to the glycosyltransferase GT106 family.

Its subcellular location is the membrane. It participates in glycan metabolism. This is O-fucosyltransferase 9 from Arabidopsis thaliana (Mouse-ear cress).